The chain runs to 129 residues: Protein FYV12 (129 aa).

Residue asparagine 91 is glycosylated (N-linked (GlcNAc...) asparagine). Residues 109-128 (LMTTFLLYVLYVCIYISAFI) form a helical membrane-spanning segment.

The protein localises to the membrane. Functionally, involved in K1 killer toxin resistance. This Saccharomyces cerevisiae (strain ATCC 204508 / S288c) (Baker's yeast) protein is Protein FYV12 (FYV12).